Consider the following 185-residue polypeptide: Peptidyl-tRNA hydrolase (185 aa).

TRNA is bound at residue tyrosine 14. The active-site Proton acceptor is the histidine 19. The tRNA site is built by tyrosine 64, asparagine 66, and asparagine 112.

This sequence belongs to the PTH family. As to quaternary structure, monomer.

It is found in the cytoplasm. The enzyme catalyses an N-acyl-L-alpha-aminoacyl-tRNA + H2O = an N-acyl-L-amino acid + a tRNA + H(+). Its function is as follows. Hydrolyzes ribosome-free peptidyl-tRNAs (with 1 or more amino acids incorporated), which drop off the ribosome during protein synthesis, or as a result of ribosome stalling. In terms of biological role, catalyzes the release of premature peptidyl moieties from peptidyl-tRNA molecules trapped in stalled 50S ribosomal subunits, and thus maintains levels of free tRNAs and 50S ribosomes. The chain is Peptidyl-tRNA hydrolase from Exiguobacterium sibiricum (strain DSM 17290 / CCUG 55495 / CIP 109462 / JCM 13490 / 255-15).